Here is a 122-residue protein sequence, read N- to C-terminus: MSPTSFFLLTLLLVLVTEARGARERFSQSAEDPSSSHMGIKIRAGGSGSGSAMEEYSVSENSWSNFKSKHPSSISSESFHEESSSSSEMSSSGGHFGLKMRGSQAGGGMSSFKTRVKSRILK.

The signal sequence occupies residues 1-21 (MSPTSFFLLTLLLVLVTEARG). Positions 23-122 (RERFSQSAED…KTRVKSRILK (100 aa)) are disordered. Residues 27–37 (SQSAEDPSSSH) show a composition bias toward polar residues.

Belongs to the SVP2/SVP5/SVP6 family. In terms of tissue distribution, testis.

Its subcellular location is the secreted. It localises to the extracellular space. In Mus musculus (Mouse), this protein is Seminal vesicle secretory protein 5 (Svs5).